The following is a 156-amino-acid chain: Small ribosomal subunit protein uS7 (156 aa).

Belongs to the universal ribosomal protein uS7 family. In terms of assembly, part of the 30S ribosomal subunit. Contacts proteins S9 and S11.

Functionally, one of the primary rRNA binding proteins, it binds directly to 16S rRNA where it nucleates assembly of the head domain of the 30S subunit. Is located at the subunit interface close to the decoding center, probably blocks exit of the E-site tRNA. The protein is Small ribosomal subunit protein uS7 of Frankia alni (strain DSM 45986 / CECT 9034 / ACN14a).